The primary structure comprises 430 residues: MAEPRQEFDTAEDHAEGYALLQDQEGEHGLKASPLQTPADDGPEEPVSETSDAKSTPTAEDVTAPLVDERTPGEQAATQPPTDIPEGTTAEEAGIGDTPNMEDQAAGHVTQARMVSKGKEGTGSEDRKAKGADSKTGTKIATPRGTAPPGQKGTANATRIPAKTTPSPKTPPGTGEPAKSGDRSGYSSPGSPGTPGSRSRTPSLPTPPTREPKKVAVVRTPPKSPSSTKSRLQTAPVPMPDLKNVRSKIGSTENLKHQPGGGKVQIINKKLDLSNVQSKCGSKDNIKHVPGGGSVQIVYKPVDLSKVTSKCGSLGNIHHKPGGGQVEVKSEKLDFKDRVQSKIGSLDNITHVPGGGNKKIETHKLTFRENAKAKTDHGAEIVYKSPVVSGDTSPRHLSNVSSTGSINMVDSPQLATLADEVSASLAKQGL.

Basic and acidic residues predominate over residues 1-16; the sequence is MAEPRQEFDTAEDHAE. The segment at 1 to 245 is disordered; the sequence is MAEPRQEFDT…PVPMPDLKNV (245 aa). Residue Ala-2 is modified to N-acetylalanine. Tyr-18 is modified (phosphotyrosine). Lys-31 is covalently cross-linked (Glycyl lysine isopeptide (Lys-Gly) (interchain with G-Cter in ubiquitin)). Ser-33 and Ser-48 each carry phosphoserine. A compositionally biased stretch (polar residues) spans 48–58; sequence SETSDAKSTPT. Thr-56, Thr-58, and Thr-98 each carry phosphothreonine. Over residues 117–133 the composition is skewed to basic and acidic residues; that stretch reads KGKEGTGSEDRKAKGAD. Thr-142 carries the post-translational modification Phosphothreonine. Arg-144 bears the Omega-N-methylarginine mark. The residue at position 152 (Lys-152) is an N6,N6-dimethyllysine; alternate. Lys-152 is subject to N6-acetyllysine; alternate. A phosphothreonine mark is found at Thr-158, Thr-164, Thr-165, and Thr-170. Residues 161–203 are compositionally biased toward low complexity; the sequence is PAKTTPSPKTPPGTGEPAKSGDRSGYSSPGSPGTPGSRSRTPS. Phosphoserine is present on residues Ser-180 and Ser-184. The residue at position 186 (Tyr-186) is a Phosphotyrosine. 3 positions are modified to phosphoserine: Ser-187, Ser-188, and Ser-191. Thr-194 and Thr-201 each carry phosphothreonine. Phosphoserine is present on Ser-203. Thr-206 carries the post-translational modification Phosphothreonine. N6-acetyllysine is present on Lys-214. Residue Thr-220 is modified to Phosphothreonine. Residues Ser-224 and Ser-226 each carry the phosphoserine modification. Tau/MAP repeat units follow at residues 233 to 263, 264 to 294, 295 to 325, and 326 to 357; these read QTAPVPMPDLKNVRSKIGSTENLKHQPGGGK, VQIINKKLDLSNVQSKCGSKDNIKHVPGGGS, VQIVYKPVDLSKVTSKCGSLGNIHHKPGGGQ, and VEVKSEKLDFKDRVQSKIGSLDNITHVPGGGN. Residue Lys-243 forms a Glycyl lysine isopeptide (Lys-Gly) (interchain with G-Cter in ubiquitin) linkage. At Lys-248 the chain carries N6-acetyllysine; alternate. Residue Lys-248 is modified to N6-methyllysine; alternate. Residue Lys-248 forms a Glycyl lysine isopeptide (Lys-Gly) (interchain with G-Cter in ubiquitin); alternate linkage. Ser-251 bears the Phosphoserine mark. Lys-256 participates in a covalent cross-link: Glycyl lysine isopeptide (Lys-Gly) (interchain with G-Cter in ubiquitin). Lys-270 carries the post-translational modification N6-acetyllysine; alternate. Residue Lys-270 forms a Glycyl lysine isopeptide (Lys-Gly) (interchain with G-Cter in ubiquitin); alternate linkage. Residues Ser-274 and Ser-278 each carry the phosphoserine modification. At Lys-279 the chain carries N6-acetyllysine. Cys-280 and Cys-311 are disulfide-bonded. Ser-282 bears the Phosphoserine mark. The residue at position 287 (Lys-287) is an N6-acetyllysine; alternate. Residue Lys-287 forms a Glycyl lysine isopeptide (Lys-Gly) (interchain with G-Cter in ubiquitin); alternate linkage. At Ser-294 the chain carries Phosphoserine. Lys-300 is subject to N6,N6-dimethyllysine; alternate. Residues Lys-300, Lys-306, and Lys-310 each carry the N6-acetyllysine; alternate modification. Residues Lys-300, Lys-306, and Lys-310 each participate in a glycyl lysine isopeptide (Lys-Gly) (interchain with G-Cter in ubiquitin); alternate cross-link. Residue Ser-313 is modified to Phosphoserine. N6-acetyllysine; alternate occurs at positions 320, 332, and 336. Residues Lys-320, Lys-332, and Lys-336 each participate in a glycyl lysine isopeptide (Lys-Gly) (interchain with G-Cter in ubiquitin); alternate cross-link. The residue at position 338 (Arg-338) is an Omega-N-methylarginine. Ser-341 carries the phosphoserine modification. A Glycyl lysine isopeptide (Lys-Gly) (interchain with G-Cter in ubiquitin) cross-link involves residue Lys-342. Ser-345 bears the Phosphoserine mark. Residue Lys-358 is modified to N6-acetyllysine; alternate. Lys-358 participates in a covalent cross-link: Glycyl lysine isopeptide (Lys-Gly) (interchain with G-Cter in ubiquitin); alternate. Residue Lys-364 forms a Glycyl lysine isopeptide (Lys-Gly) (interchain with G-Cter in ubiquitin) linkage. Lys-374 is modified (N6-acetyllysine; alternate). Lys-374 participates in a covalent cross-link: Glycyl lysine isopeptide (Lys-Gly) (interchain with G-Cter in ubiquitin); alternate. Phosphotyrosine is present on Tyr-383. Residues Ser-385 and Ser-389 each carry the phosphoserine modification. Residues 387-406 are disordered; the sequence is VVSGDTSPRHLSNVSSTGSI. A compositionally biased stretch (polar residues) spans 390 to 406; that stretch reads GDTSPRHLSNVSSTGSI. A Phosphothreonine modification is found at Thr-392. Phosphoserine occurs at positions 393, 398, 405, and 411. Thr-416 carries the phosphothreonine modification.

Interacts with MARK1, MARK2, MARK3 and MARK4. Interacts with SQSTM1 when polyubiquitinated. Interacts with PSMC2 through SQSTM1. Interacts with FKBP4. Binds to CSNK1D. Interacts with SGK1. Interacts with PIN1. Interacts with LRRK2. Interacts with LRP1, leading to endocytosis; this interaction is reduced in the presence of LRPAP1/RAP. In terms of processing, polyubiquitinated. Requires functional TRAF6 and may provoke SQSTM1-dependent degradation by the proteasome. Phosphorylation at various serine and threonine residues in S-P or T-P motifs by proline-directed protein kinases (PDPK1, CDK1, CDK5, GSK3, MAPK) (a few sites per protein in interphase, more in mitosis), and at serine residues in K-X-G-S motifs by MAP/microtubule affinity-regulating kinase (MARK1, MARK2, MARK3 or MARK4), causing detachment from microtubules, and their disassembly. Phosphorylation at Ser-345 by BRSK1 and BRSK2 in neurons affects ability to bind microtubules and plays a role in neuron polarization. Phosphorylated by PHK. Dephosphorylation at several serine and threonine residues by the serine/threonine phosphatase PPP5C. Post-translationally, hyperphosphorylated (in particular at Thr-170, Ser-191, Thr-194, Ser-251, and Ser-345) during hibernation. Phosphorylation is fully reversible after arousal. Highly phosphorylated tau contains a number of paired helical filaments (PHFs)-like epitopes. PHF-like phosphorylation is not associated with fibril formation. Distribution of PHF-like tau is more intense in the entorhinal cortex, hippocampus and isocortical areas. PHF-like phosphorylation-dephosphorylation during hibernation cycle is synchronized with regression-re-establishment of afferentation. It may reflect a protective mechanism in an unfavorable environment.

It is found in the cytoplasm. Its subcellular location is the cytosol. It localises to the cell membrane. The protein localises to the cytoskeleton. The protein resides in the cell projection. It is found in the axon. Its subcellular location is the dendrite. Promotes microtubule assembly and stability, and might be involved in the establishment and maintenance of neuronal polarity. The C-terminus binds axonal microtubules while the N-terminus binds neural plasma membrane components, suggesting that tau functions as a linker protein between both. Axonal polarity is predetermined by tau localization (in the neuronal cell) in the domain of the cell body defined by the centrosome. The short isoforms allow plasticity of the cytoskeleton whereas the longer isoforms may preferentially play a role in its stabilization. This is Microtubule-associated protein tau (MAPT) from Spermophilus citellus (European ground squirrel).